We begin with the raw amino-acid sequence, 482 residues long: 7-deoxyloganetic acid glucosyl transferase (482 aa).

Residue H22 is the Proton acceptor of the active site. An anthocyanidin is bound at residue H22. D127 acts as the Charge relay in catalysis. UDP-alpha-D-glucose-binding residues include T149, A362, Q364, H379, W382, N383, S384, and E387. A402 is an an anthocyanidin binding site. UDP-alpha-D-glucose-binding residues include D403 and Q404.

This sequence belongs to the UDP-glycosyltransferase family. As to expression, expressed in the leaf internal phloem-associated parenchyma (IPAP) inside the mesophyll. Mostly observed in leaves, roots and stems, and, to a lower extent, in flowers.

Its subcellular location is the nucleus. It is found in the cytoplasm. The protein resides in the cytosol. The catalysed reaction is 7-deoxyloganetate + UDP-alpha-D-glucose = 7-deoxyloganate + UDP + H(+). The protein operates within alkaloid biosynthesis. Component of the seco-iridoid and derivatives monoterpenoid indole alkaloids (MIAs, e.g. vincristine, quinine, and strychnine) biosynthesis pathway. Catalyzes the glucosylation of 7-deoxyloganetic acid to form 7-deoxyloganic acid using UDP-glucose as the sugar donor. Inactive with loganetic acid, loganetin, iridodial, iridotrial, 8-OH-geraniol, jasmonic acid, gibberellic acid, indole acetic acid, salicylic acid, abscisic acid, zeatin and luteolin. The polypeptide is 7-deoxyloganetic acid glucosyl transferase (Catharanthus roseus (Madagascar periwinkle)).